The sequence spans 293 residues: Glutamyl-Q tRNA(Asp) synthetase (293 aa).

L-glutamate is bound by residues 8 to 12 (RFAPT) and Glu44. Residues 11–21 (PTPSGYLHFGS) carry the 'HIGH' region motif. Residues Cys100, Cys102, Tyr114, and Cys118 each contribute to the Zn(2+) site. Positions 171 and 189 each coordinate L-glutamate. Positions 227-231 (KLGKS) match the 'KMSKS' region motif. Lys230 lines the ATP pocket.

The protein belongs to the class-I aminoacyl-tRNA synthetase family. GluQ subfamily. Requires Zn(2+) as cofactor.

In terms of biological role, catalyzes the tRNA-independent activation of glutamate in presence of ATP and the subsequent transfer of glutamate onto a tRNA(Asp). Glutamate is transferred on the 2-amino-5-(4,5-dihydroxy-2-cyclopenten-1-yl) moiety of the queuosine in the wobble position of the QUC anticodon. The sequence is that of Glutamyl-Q tRNA(Asp) synthetase from Pseudomonas aeruginosa (strain LESB58).